Consider the following 567-residue polypeptide: Organic cation transporter-like protein (567 aa).

Over 1-21 (MGYDEAIIHLGDFGRYQKIIY) the chain is Cytoplasmic. The helical transmembrane segment at 22–42 (FLICLTSIPVAFHKLAGVFLL) threads the bilayer. At 43-127 (AKPDFRCALP…TEWNLVCGRD (85 aa)) the chain is on the extracellular side. 4 N-linked (GlcNAc...) asparagine glycosylation sites follow: Asn55, Asn67, Asn89, and Asn97. The helical transmembrane segment at 128–148 (FMAATSDSLFMLGVLLGSIVF) threads the bilayer. The Cytoplasmic portion of the chain corresponds to 149–158 (GQLSDKYGRK). Residues 159-179 (PILFASLVIQVLFGVLAGVAP) form a helical membrane-spanning segment. Residues 180-189 (EYFTYTFARL) lie on the Extracellular side of the membrane. The chain crosses the membrane as a helical span at residues 190 to 210 (MVGATTSGVFLVAYVVAMEMV). Over 211–219 (GPDKRLYAG) the chain is Cytoplasmic. A helical transmembrane segment spans residues 220–240 (IFVMMFFSVGFMLTAVFAYFV). The Extracellular portion of the chain corresponds to 241 to 244 (HDWR). The helical transmembrane segment at 245-265 (WLQIALTLPGLIFMFYYWIIP) threads the bilayer. The Cytoplasmic portion of the chain corresponds to 266 to 343 (ESARWLLLKG…LFCYPNLRRK (78 aa)). The tract at residues 304 to 326 (LDEGENSEEKAKQKLEDQELDEG) is disordered. Residues 310–320 (SEEKAKQKLED) show a composition bias toward basic and acidic residues. A helical transmembrane segment spans residues 344-364 (TLLIFLDWLVTSGVYYGLSWN). The Extracellular segment spans residues 365–371 (TSNLGGN). Residues 372–392 (VLLNFVISGAVEIPAYIFLLL) traverse the membrane as a helical segment. Topologically, residues 393-400 (TLNRWGRR) are cytoplasmic. The helical transmembrane segment at 401 to 421 (SILCGCLVMAGLSLLATVIIP) threads the bilayer. Residues 422-427 (QRMHTL) lie on the Extracellular side of the membrane. A helical membrane pass occupies residues 428–448 (IVACAMLGKLAITASYGTVYI). Residues 449–462 (FSAEQFPTVVRNVA) lie on the Cytoplasmic side of the membrane. The helical transmembrane segment at 463 to 483 (LGAASMVARISGMMAPFLNFL) threads the bilayer. At 484–489 (ATIWKP) the chain is on the extracellular side. The helical transmembrane segment at 490 to 510 (LPLLICGSLTLVAGLLSLLLP) threads the bilayer. Residues 511–567 (ETHNKPMLETIADGERFGKKTKADVYLETGQELRAPEAQPLKGSGETNGSTIANGHK) are Cytoplasmic-facing. Residues 546–567 (PEAQPLKGSGETNGSTIANGHK) form a disordered region. Residues 555-567 (GETNGSTIANGHK) are compositionally biased toward polar residues.

Belongs to the major facilitator (TC 2.A.1) superfamily. Organic cation transporter (TC 2.A.1.19) family.

The protein resides in the membrane. Functionally, probably transports organic cations. The polypeptide is Organic cation transporter-like protein (Orct2) (Drosophila melanogaster (Fruit fly)).